Here is a 461-residue protein sequence, read N- to C-terminus: Bifunctional protein GlmU (461 aa).

The pyrophosphorylase stretch occupies residues 1 to 232 (MNLQIIILAA…SFEVQGINNR (232 aa)). Residues 8-11 (LAAG), Lys-22, Gln-73, and 78-79 (GT) each bind UDP-N-acetyl-alpha-D-glucosamine. Asp-102 lines the Mg(2+) pocket. 3 residues coordinate UDP-N-acetyl-alpha-D-glucosamine: Gly-142, Glu-157, and Asn-230. Asn-230 serves as a coordination point for Mg(2+). The segment at 233-253 (QQLQQLERIWQQRAANQLMEK) is linker. The tract at residues 254–461 (GATLADANRF…WKRPVKRERD (208 aa)) is N-acetyltransferase. Positions 336 and 354 each coordinate UDP-N-acetyl-alpha-D-glucosamine. The active-site Proton acceptor is His-366. Tyr-369 and Asn-380 together coordinate UDP-N-acetyl-alpha-D-glucosamine. Residues Ala-383, 389-390 (NY), Ser-408, and Ala-426 contribute to the acetyl-CoA site.

In the N-terminal section; belongs to the N-acetylglucosamine-1-phosphate uridyltransferase family. The protein in the C-terminal section; belongs to the transferase hexapeptide repeat family. Homotrimer. Mg(2+) is required as a cofactor.

It localises to the cytoplasm. It catalyses the reaction alpha-D-glucosamine 1-phosphate + acetyl-CoA = N-acetyl-alpha-D-glucosamine 1-phosphate + CoA + H(+). The enzyme catalyses N-acetyl-alpha-D-glucosamine 1-phosphate + UTP + H(+) = UDP-N-acetyl-alpha-D-glucosamine + diphosphate. The protein operates within nucleotide-sugar biosynthesis; UDP-N-acetyl-alpha-D-glucosamine biosynthesis; N-acetyl-alpha-D-glucosamine 1-phosphate from alpha-D-glucosamine 6-phosphate (route II): step 2/2. It participates in nucleotide-sugar biosynthesis; UDP-N-acetyl-alpha-D-glucosamine biosynthesis; UDP-N-acetyl-alpha-D-glucosamine from N-acetyl-alpha-D-glucosamine 1-phosphate: step 1/1. It functions in the pathway bacterial outer membrane biogenesis; LPS lipid A biosynthesis. In terms of biological role, catalyzes the last two sequential reactions in the de novo biosynthetic pathway for UDP-N-acetylglucosamine (UDP-GlcNAc). The C-terminal domain catalyzes the transfer of acetyl group from acetyl coenzyme A to glucosamine-1-phosphate (GlcN-1-P) to produce N-acetylglucosamine-1-phosphate (GlcNAc-1-P), which is converted into UDP-GlcNAc by the transfer of uridine 5-monophosphate (from uridine 5-triphosphate), a reaction catalyzed by the N-terminal domain. This chain is Bifunctional protein GlmU, found in Legionella pneumophila (strain Corby).